Consider the following 114-residue polypeptide: UPF0342 protein PEPE_0673 (114 aa).

The protein belongs to the UPF0342 family.

This is UPF0342 protein PEPE_0673 from Pediococcus pentosaceus (strain ATCC 25745 / CCUG 21536 / LMG 10740 / 183-1w).